Reading from the N-terminus, the 271-residue chain is HTH-type transcriptional repressor AllR (271 aa).

Positions 21 to 83 (AQALERGIAI…SQLGWWHIGL (63 aa)) constitute an HTH iclR-type domain. The segment at residues 43 to 62 (VSDISLNLDLPLSTTFRLLK) is a DNA-binding region (H-T-H motif). The IclR-ED domain maps to 98 to 267 (VLSVAGPFMR…ARDISTALGL (170 aa)). Glyoxylate-binding positions include 154–156 (SGA), Asp-207, Cys-217, and 234–236 (SIS).

Negative regulator of allantoin and glyoxylate utilization operons. Binds to the gcl promoter and to the allS-allA intergenic region. The chain is HTH-type transcriptional repressor AllR (allR) from Escherichia coli (strain UTI89 / UPEC).